We begin with the raw amino-acid sequence, 191 residues long: Ribonuclease M5 (191 aa).

The Toprim domain maps to 8–91 (HEFIVVEGRD…AFINRQDALP (84 aa)). Positions 14, 60, and 62 each coordinate Mg(2+).

Belongs to the ribonuclease M5 family. It depends on Mg(2+) as a cofactor.

It localises to the cytoplasm. The enzyme catalyses Endonucleolytic cleavage of RNA, removing 21 and 42 nucleotides, respectively, from the 5'- and 3'-termini of a 5S-rRNA precursor.. Required for correct processing of both the 5' and 3' ends of 5S rRNA precursor. Cleaves both sides of a double-stranded region yielding mature 5S rRNA in one step. In Listeria monocytogenes serovar 1/2a (strain ATCC BAA-679 / EGD-e), this protein is Ribonuclease M5.